The following is a 119-amino-acid chain: MPRVKRGVTARARHKKVLVQAKGYRGRRKNVYRIAKQAVMKAGQYQYRDRRQRKRQFRSLWIARINAAARELGMKYSTFMNGLKKANIEVDRKVLADLAVFDQPAFAALAAQAKAQLGA.

Belongs to the bacterial ribosomal protein bL20 family.

Binds directly to 23S ribosomal RNA and is necessary for the in vitro assembly process of the 50S ribosomal subunit. It is not involved in the protein synthesizing functions of that subunit. This chain is Large ribosomal subunit protein bL20, found in Dechloromonas aromatica (strain RCB).